The chain runs to 1094 residues: Centrosomal protein of 128 kDa (1094 aa).

The tract at residues 1–29 (MAESSSESDHFRCRDRLSPWAARSTHRGT) is disordered. Residues 7–17 (ESDHFRCRDRL) are compositionally biased toward basic and acidic residues. A Phosphoserine modification is found at serine 31. Residues 115-140 (DGGTGSELHHFPPTSPLKDYGDPQGI) form a disordered region. Coiled-coil stretches lie at residues 190 to 827 (SRSD…QESI) and 879 to 959 (EELK…IALE). A phosphoserine mark is found at serine 249, serine 291, and serine 331. A disordered region spans residues 319 to 345 (AEGDRKGLQHQVSQISKQQSNYQDEQG). Positions 328–342 (HQVSQISKQQSNYQD) are enriched in polar residues. Over residues 987-999 (DSCSSSERTDGRY) the composition is skewed to basic and acidic residues. The interval 987–1018 (DSCSSSERTDGRYSKYRVRRNSLQHHQDDTKY) is disordered. Positions 1000-1009 (SKYRVRRNSL) are enriched in basic residues. Phosphoserine is present on serine 1061. Residues 1067-1094 (VAPDSASNKEDATMNGTSSQPKKEEYGS) form a disordered region.

It is found in the cytoplasm. The protein resides in the cytoskeleton. The protein localises to the microtubule organizing center. It localises to the centrosome. Its subcellular location is the centriole. It is found in the spindle pole. This Homo sapiens (Human) protein is Centrosomal protein of 128 kDa (CEP128).